Here is a 689-residue protein sequence, read N- to C-terminus: Glycine--tRNA ligase beta subunit (689 aa).

This sequence belongs to the class-II aminoacyl-tRNA synthetase family. Tetramer of two alpha and two beta subunits.

It localises to the cytoplasm. It catalyses the reaction tRNA(Gly) + glycine + ATP = glycyl-tRNA(Gly) + AMP + diphosphate. The sequence is that of Glycine--tRNA ligase beta subunit from Edwardsiella ictaluri (strain 93-146).